The following is a 454-amino-acid chain: Bifunctional protein GlmU (454 aa).

Positions 1–225 (MNIVILAAGM…VWETLGVNSK (225 aa)) are pyrophosphorylase. UDP-N-acetyl-alpha-D-glucosamine contacts are provided by residues 6–9 (LAAG), Lys20, Gln71, 76–77 (GT), 98–100 (YGD), Gly135, Glu150, Asn165, and Asn223. Position 100 (Asp100) interacts with Mg(2+). Asn223 provides a ligand contact to Mg(2+). Positions 226 to 246 (LQLAEVERIHQGNQARRLLEA) are linker. The tract at residues 247-454 (GVTLLDPARI…WQRPVKQPKQ (208 aa)) is N-acetyltransferase. Arg329 and Lys347 together coordinate UDP-N-acetyl-alpha-D-glucosamine. The active-site Proton acceptor is His359. Residues Tyr362 and Asn373 each contribute to the UDP-N-acetyl-alpha-D-glucosamine site. Acetyl-CoA contacts are provided by residues Ala376, 382–383 (NY), Ser401, Ala419, and Arg436.

The protein in the N-terminal section; belongs to the N-acetylglucosamine-1-phosphate uridyltransferase family. In the C-terminal section; belongs to the transferase hexapeptide repeat family. Homotrimer. Mg(2+) serves as cofactor.

It is found in the cytoplasm. The enzyme catalyses alpha-D-glucosamine 1-phosphate + acetyl-CoA = N-acetyl-alpha-D-glucosamine 1-phosphate + CoA + H(+). The catalysed reaction is N-acetyl-alpha-D-glucosamine 1-phosphate + UTP + H(+) = UDP-N-acetyl-alpha-D-glucosamine + diphosphate. It functions in the pathway nucleotide-sugar biosynthesis; UDP-N-acetyl-alpha-D-glucosamine biosynthesis; N-acetyl-alpha-D-glucosamine 1-phosphate from alpha-D-glucosamine 6-phosphate (route II): step 2/2. The protein operates within nucleotide-sugar biosynthesis; UDP-N-acetyl-alpha-D-glucosamine biosynthesis; UDP-N-acetyl-alpha-D-glucosamine from N-acetyl-alpha-D-glucosamine 1-phosphate: step 1/1. Its pathway is bacterial outer membrane biogenesis; LPS lipid A biosynthesis. Its function is as follows. Catalyzes the last two sequential reactions in the de novo biosynthetic pathway for UDP-N-acetylglucosamine (UDP-GlcNAc). The C-terminal domain catalyzes the transfer of acetyl group from acetyl coenzyme A to glucosamine-1-phosphate (GlcN-1-P) to produce N-acetylglucosamine-1-phosphate (GlcNAc-1-P), which is converted into UDP-GlcNAc by the transfer of uridine 5-monophosphate (from uridine 5-triphosphate), a reaction catalyzed by the N-terminal domain. The chain is Bifunctional protein GlmU from Cupriavidus taiwanensis (strain DSM 17343 / BCRC 17206 / CCUG 44338 / CIP 107171 / LMG 19424 / R1) (Ralstonia taiwanensis (strain LMG 19424)).